We begin with the raw amino-acid sequence, 664 residues long: Exoribonuclease 2 (664 aa).

The 329-residue stretch at 193–521 (RIDMTHIPFV…INHRMLKALI (329 aa)) folds into the RNB domain. Residues 568-650 (QTLFTGEIFD…ENRSLVAKPT (83 aa)) form the S1 motif domain.

Belongs to the RNR ribonuclease family. RNase II subfamily.

The protein resides in the cytoplasm. It carries out the reaction Exonucleolytic cleavage in the 3'- to 5'-direction to yield nucleoside 5'-phosphates.. Its function is as follows. Involved in mRNA degradation. Hydrolyzes single-stranded polyribonucleotides processively in the 3' to 5' direction. In Vibrio vulnificus (strain CMCP6), this protein is Exoribonuclease 2.